Here is a 393-residue protein sequence, read N- to C-terminus: NAD(P)H-quinone oxidoreductase subunit H, chloroplastic (393 aa).

It belongs to the complex I 49 kDa subunit family. As to quaternary structure, NDH is composed of at least 16 different subunits, 5 of which are encoded in the nucleus.

The protein localises to the plastid. The protein resides in the chloroplast thylakoid membrane. It catalyses the reaction a plastoquinone + NADH + (n+1) H(+)(in) = a plastoquinol + NAD(+) + n H(+)(out). The enzyme catalyses a plastoquinone + NADPH + (n+1) H(+)(in) = a plastoquinol + NADP(+) + n H(+)(out). NDH shuttles electrons from NAD(P)H:plastoquinone, via FMN and iron-sulfur (Fe-S) centers, to quinones in the photosynthetic chain and possibly in a chloroplast respiratory chain. The immediate electron acceptor for the enzyme in this species is believed to be plastoquinone. Couples the redox reaction to proton translocation, and thus conserves the redox energy in a proton gradient. The sequence is that of NAD(P)H-quinone oxidoreductase subunit H, chloroplastic from Zea mays (Maize).